Reading from the N-terminus, the 274-residue chain is Hydroxyethylthiazole kinase (274 aa).

Met46 contacts substrate. Residues Arg122 and Thr173 each contribute to the ATP site. Substrate is bound at residue Gly200.

It belongs to the Thz kinase family. The cofactor is Mg(2+).

It carries out the reaction 5-(2-hydroxyethyl)-4-methylthiazole + ATP = 4-methyl-5-(2-phosphooxyethyl)-thiazole + ADP + H(+). The protein operates within cofactor biosynthesis; thiamine diphosphate biosynthesis; 4-methyl-5-(2-phosphoethyl)-thiazole from 5-(2-hydroxyethyl)-4-methylthiazole: step 1/1. Its function is as follows. Catalyzes the phosphorylation of the hydroxyl group of 4-methyl-5-beta-hydroxyethylthiazole (THZ). In Clostridium tetani (strain Massachusetts / E88), this protein is Hydroxyethylthiazole kinase.